Here is a 508-residue protein sequence, read N- to C-terminus: UDP-N-acetylmuramoyl-L-alanyl-D-glutamate--L-lysine ligase (508 aa).

Ser-47 contacts UDP-N-acetyl-alpha-D-muramoyl-L-alanyl-D-glutamate. 124–130 lines the ATP pocket; it reads GTKGKTT. Residues 168–169, Ser-195, and Arg-203 contribute to the UDP-N-acetyl-alpha-D-muramoyl-L-alanyl-D-glutamate site; that span reads TT. An N6-carboxylysine modification is found at Lys-237. An L-lysine recognition motif motif is present at residues 425 to 428; sequence DDPA.

This sequence belongs to the MurCDEF family. MurE subfamily. Carboxylation is probably crucial for Mg(2+) binding and, consequently, for the gamma-phosphate positioning of ATP.

It localises to the cytoplasm. It carries out the reaction UDP-N-acetyl-alpha-D-muramoyl-L-alanyl-D-glutamate + L-lysine + ATP = UDP-N-acetyl-alpha-D-muramoyl-L-alanyl-gamma-D-glutamyl-L-lysine + ADP + phosphate + H(+). Its pathway is cell wall biogenesis; peptidoglycan biosynthesis. Its function is as follows. Catalyzes the addition of L-lysine to the nucleotide precursor UDP-N-acetylmuramoyl-L-alanyl-D-glutamate (UMAG) in the biosynthesis of bacterial cell-wall peptidoglycan. This Enterococcus faecalis (strain ATCC 700802 / V583) protein is UDP-N-acetylmuramoyl-L-alanyl-D-glutamate--L-lysine ligase.